Consider the following 135-residue polypeptide: Aspartate 1-decarboxylase (135 aa).

The Schiff-base intermediate with substrate; via pyruvic acid role is filled by Ser25. Ser25 is modified (pyruvic acid (Ser)). Thr57 is a binding site for substrate. Tyr58 functions as the Proton donor in the catalytic mechanism. Gly73–Ala75 contributes to the substrate binding site.

This sequence belongs to the PanD family. Heterooctamer of four alpha and four beta subunits. Pyruvate serves as cofactor. In terms of processing, is synthesized initially as an inactive proenzyme, which is activated by self-cleavage at a specific serine bond to produce a beta-subunit with a hydroxyl group at its C-terminus and an alpha-subunit with a pyruvoyl group at its N-terminus.

The protein localises to the cytoplasm. It catalyses the reaction L-aspartate + H(+) = beta-alanine + CO2. It participates in cofactor biosynthesis; (R)-pantothenate biosynthesis; beta-alanine from L-aspartate: step 1/1. Functionally, catalyzes the pyruvoyl-dependent decarboxylation of aspartate to produce beta-alanine. The sequence is that of Aspartate 1-decarboxylase from Mycobacterium sp. (strain JLS).